A 588-amino-acid chain; its full sequence is Putative pentatricopeptide repeat-containing protein At5g52630 (588 aa).

11 PPR repeats span residues 14–48, 49–79, 80–114, 115–149, 150–180, 181–215, 216–250, 251–281, 282–316, 317–351, and 352–386; these read NYNQ…GLSL, IPLV…SPQK, SSTT…NLRP, DDHV…GYDA, DVFV…MPQR, NVVT…NLAV, NDYS…SFDS, SSFV…VPVK, NLGI…GMKP, NFIT…RIEP, and TDKH…PTES. The tract at residues 387–462 is type E motif; that stretch reads VWGALLTSCT…ETGLSWVEER (76 aa). The interval 463–493 is type E(+) motif; it reads NKVHTFAAGERRHEKSKEIYEKLAELGEEME. The tract at residues 494–588 is type DYW motif; it reads KAGYIADTSY…DGKCSCNDYW (95 aa).

This sequence belongs to the PPR family. PCMP-H subfamily.

This Arabidopsis thaliana (Mouse-ear cress) protein is Putative pentatricopeptide repeat-containing protein At5g52630 (PCMP-H52).